A 169-amino-acid polypeptide reads, in one-letter code: Large ribosomal subunit protein uL10 (169 aa).

This sequence belongs to the universal ribosomal protein uL10 family. In terms of assembly, part of the ribosomal stalk of the 50S ribosomal subunit. The N-terminus interacts with L11 and the large rRNA to form the base of the stalk. The C-terminus forms an elongated spine to which L12 dimers bind in a sequential fashion forming a multimeric L10(L12)X complex.

In terms of biological role, forms part of the ribosomal stalk, playing a central role in the interaction of the ribosome with GTP-bound translation factors. The polypeptide is Large ribosomal subunit protein uL10 (Orientia tsutsugamushi (strain Boryong) (Rickettsia tsutsugamushi)).